Reading from the N-terminus, the 1139-residue chain is DNA-directed RNA polymerase subunit beta (1139 aa).

Residues 1085-1139 (ADTSNRHTPSRPTYESVTSEDLSPSPAFTRVLRTADANASRSLEEDEDEEEEEDF) form a disordered region. Polar residues predominate over residues 1086–1106 (DTSNRHTPSRPTYESVTSEDL). The segment covering 1128–1139 (EEDEDEEEEEDF) has biased composition (acidic residues).

Belongs to the RNA polymerase beta chain family. In terms of assembly, in cyanobacteria the RNAP catalytic core is composed of 2 alpha, 1 beta, 1 beta', 1 gamma and 1 omega subunit. When a sigma factor is associated with the core the holoenzyme is formed, which can initiate transcription.

The enzyme catalyses RNA(n) + a ribonucleoside 5'-triphosphate = RNA(n+1) + diphosphate. In terms of biological role, DNA-dependent RNA polymerase catalyzes the transcription of DNA into RNA using the four ribonucleoside triphosphates as substrates. In Synechococcus sp. (strain JA-2-3B'a(2-13)) (Cyanobacteria bacterium Yellowstone B-Prime), this protein is DNA-directed RNA polymerase subunit beta.